Here is a 566-residue protein sequence, read N- to C-terminus: MKPVWVIILGWILLVPRVGTAWRGPPEEASFYYGTFPPGFSWGVGSSAYQTEGAWDEDGKGPSIWDAFTHGRKEQVLGGDTADTACDSYYKVQEDIALLKELQVSHYRFSLSWPRLLPTGVRAEQVNKRGIKFYSDFIDALLKSNITPVVTLHHWDLPQMLQVAYGGWQNVSMTRYFSDYADLCFEVFGDRVKHWLTFSDPRTMVEKGYETGLHAPGLRLQGTGLYVAAHHIIKAHAQAWHSYNNTWRSKQHGLVGISLNCDWGEPVDIDNPDDIEAAERYLQFCLGWFANPIYAGDYPQVMKDHIGTKSAEQGLEMSRLPTFSLQEKSYLKGTSDFLGLGHFTTRYITQRKYPSHQGPSYQNDRDLVELVDPNWPEMGSPWLYSVPWGFRRLLNFAQTQYGDPPIYVTESGAPQKLHCTQFCDEWRIQYLKGYINEMLKAIKDGVDIKGYTSWSLLDKFEWEKGYADKYGFYYVEFNVRNKPRYPKASVQYYKEIITASGFPNPQEVESWRLKALETCSINNQMLATEPLLRHMHVASEIVVPTVCALSILTAALMLTLLLRRRG.

Residues 1–20 (MKPVWVIILGWILLVPRVGT) form the signal peptide. At 21–540 (AWRGPPEEAS…LLRHMHVASE (520 aa)) the chain is on the extracellular side. N-linked (GlcNAc...) asparagine glycosylation is found at Asn-170 and Asn-244. Residues 541–561 (IVVPTVCALSILTAALMLTLL) form a helical membrane-spanning segment. Residues 562–566 (LRRRG) lie on the Cytoplasmic side of the membrane.

The protein belongs to the glycosyl hydrolase 1 family. Klotho subfamily. May form dimers. As to expression, strongly expressed in the lens of the eye, where it localizes to the equatorial epithelium and outer layers of newly extending fiber cells (at protein level). May also be expressed in kidney and skin. However, another study suggests that expression is specific to eye and is minimal in other tissues.

It is found in the endoplasmic reticulum membrane. Its function is as follows. Plays a role in formation of the lens suture in the eye, which is important for normal optical properties of the lens. The polypeptide is Lactase-like protein (Lctl) (Mus musculus (Mouse)).